The chain runs to 163 residues: Urease accessory protein UreE (163 aa).

The protein belongs to the UreE family.

It is found in the cytoplasm. Functionally, involved in urease metallocenter assembly. Binds nickel. Probably functions as a nickel donor during metallocenter assembly. The polypeptide is Urease accessory protein UreE (Actinomyces naeslundii).